Here is a 103-residue protein sequence, read N- to C-terminus: MYAVIKTGGKQYKVQEGDTLRVEKLEGTENGEIEFNDVLMFSDGENVTLGQPAIEDAIVKGHILEQGKGKKVLIFKFKRRKGYRNLRGHRQQYTAVKIDSILV.

Belongs to the bacterial ribosomal protein bL21 family. In terms of assembly, part of the 50S ribosomal subunit. Contacts protein L20.

This protein binds to 23S rRNA in the presence of protein L20. This is Large ribosomal subunit protein bL21 from Desulforapulum autotrophicum (strain ATCC 43914 / DSM 3382 / VKM B-1955 / HRM2) (Desulfobacterium autotrophicum).